Consider the following 283-residue polypeptide: Cyclin-C (283 aa).

The Cyclin N-terminal domain occupies 46 to 144; that stretch reads NVIQALGEHL…ILECEFYLLE (99 aa). The disordered stretch occupies residues 252 to 283; that stretch reads TILSKMPKPKPPPNSEGEQGPNGSQNSSYSQS. A compositionally biased stretch (polar residues) spans 272 to 283; it reads PNGSQNSSYSQS.

It belongs to the cyclin family. Cyclin C subfamily. In terms of assembly, component of the Mediator complex. The cylin/CDK pair formed by CCNC/CDK8 also associates with the large subunit of RNA polymerase II.

Its subcellular location is the nucleus. Component of the Mediator complex, a coactivator involved in regulated gene transcription of nearly all RNA polymerase II-dependent genes. Mediator functions as a bridge to convey information from gene-specific regulatory proteins to the basal RNA polymerase II transcription machinery. Mediator is recruited to promoters by direct interactions with regulatory proteins and serves as a scaffold for the assembly of a functional preinitiation complex with RNA polymerase II and the general transcription factors. Binds to and activates cyclin-dependent kinase CDK8 that phosphorylates the CTD (C-terminal domain) of the large subunit of RNA polymerase II (RNAp II), which may inhibit the formation of a transcription initiation complex. This is Cyclin-C (CCNC) from Gallus gallus (Chicken).